Here is a 225-residue protein sequence, read N- to C-terminus: Rho GDP-dissociation inhibitor 3 (225 aa).

It belongs to the Rho GDI family.

It is found in the cytoplasm. In terms of biological role, inhibits GDP/GTP exchange reaction of RhoB. Interacts specifically with the GDP- and GTP-bound forms of post-translationally processed Rhob and Rhog proteins, both of which show a growth-regulated expression in mammalian cells. Stimulates the release of the GDP-bound but not the GTP-bound RhoB protein. Also inhibits the GDP/GTP exchange of RhoB but shows less ability to inhibit the dissociation of prebound GTP. In Bos taurus (Bovine), this protein is Rho GDP-dissociation inhibitor 3 (ARHGDIG).